Here is a 306-residue protein sequence, read N- to C-terminus: Acetyl-coenzyme A carboxylase carboxyl transferase subunit beta (306 aa).

Residues Leu25–Thr294 form the CoA carboxyltransferase N-terminal domain.

The protein belongs to the AccD/PCCB family. As to quaternary structure, acetyl-CoA carboxylase is a heterohexamer composed of biotin carboxyl carrier protein (AccB), biotin carboxylase (AccC) and two subunits each of ACCase subunit alpha (AccA) and ACCase subunit beta (AccD).

The protein resides in the cytoplasm. The enzyme catalyses N(6)-carboxybiotinyl-L-lysyl-[protein] + acetyl-CoA = N(6)-biotinyl-L-lysyl-[protein] + malonyl-CoA. It participates in lipid metabolism; malonyl-CoA biosynthesis; malonyl-CoA from acetyl-CoA: step 1/1. In terms of biological role, component of the acetyl coenzyme A carboxylase (ACC) complex. Biotin carboxylase (BC) catalyzes the carboxylation of biotin on its carrier protein (BCCP) and then the CO(2) group is transferred by the transcarboxylase to acetyl-CoA to form malonyl-CoA. The protein is Acetyl-coenzyme A carboxylase carboxyl transferase subunit beta of Allorhizobium ampelinum (strain ATCC BAA-846 / DSM 112012 / S4) (Agrobacterium vitis (strain S4)).